Consider the following 296-residue polypeptide: Galectin-3 (296 aa).

A compositionally biased stretch (polar residues) spans 1 to 11 (MADSFSLNDAL). Residues 1-150 (MADSFSLNDA…PSAPGAYPAA (150 aa)) form a disordered region. The residue at position 2 (Ala-2) is an N-acetylalanine. 2 positions are modified to phosphoserine; by CK1: Ser-6 and Ser-12. 2 stretches are compositionally biased toward low complexity: residues 12 to 31 (SGSG…NQPA) and 38 to 47 (GASYPGAYPG). A run of 8 repeats spans residues 36–44 (YPGASYPGA), 45–53 (YPGQAPPGG), 54–62 (YPGQAPPGG), 63–71 (YPGQAPPGG), 72–80 (YPGQAPPGG), 81–89 (YPGQAPPGG), 90–98 (YPGQAPPGG), and 99–107 (YPGQAPPGT). The 12 X 9 AA tandem repeats of Y-P-G-X(3)-P-G-[GAT] stretch occupies residues 36 to 143 (YPGASYPGAY…AYPPPGQPSA (108 aa)). A compositionally biased stretch (pro residues) spans 48-120 (QAPPGGYPGQ…PTAPAYPGPT (73 aa)). The stretch at 108 to 115 (YPGPTAPA) is one 9; approximate repeat. Copy 10 of the repeat occupies 116–124 (YPGPTAPGT). Positions 121 to 133 (APGTQPGQPSGPG) are enriched in low complexity. An 11; approximate repeat occupies 125-134 (QPGQPSGPGA). Residues 135 to 143 (YPPPGQPSA) form a 12; approximate repeat. The region spanning 164–294 (YDLPLPGGVK…DIDLTSASYA (131 aa)) is the Galectin domain. 227-233 (WGKEERQ) contributes to the a beta-D-galactoside binding site. A Nuclear export signal motif is present at residues 272 to 287 (KNLPEISKLGISGDID).

As to quaternary structure, probably forms homo- or heterodimers. Interacts with DMBT1. Interacts with CD6 and ALCAM. Forms a complex with the ITGA3, ITGB1 and CSPG4. Interacts with LGALS3BP, LYPD3, ZFTRAF1 and UACA. Interacts with TRIM16; this interaction mediates autophagy of damage endomembranes. Interacts with cargo receptor TMED10; the interaction mediates the translocation from the cytoplasm into the ERGIC (endoplasmic reticulum-Golgi intermediate compartment) and thereby secretion. Interacts with and inhibits by binding NCR3/NKp30. The degree of phosphorylation is higher in the cytoplasmic form than in the nuclear form. In protein isolated from a canine kidney cell line, 90% of the phosphate was on Ser-6 and 10% was on Ser-12.

It is found in the cytoplasm. It localises to the nucleus. Its subcellular location is the secreted. Functionally, galactose-specific lectin which binds IgE. May mediate with the alpha-3, beta-1 integrin the stimulation by CSPG4 of endothelial cells migration. Together with DMBT1, required for terminal differentiation of columnar epithelial cells during early embryogenesis. In the nucleus: acts as a pre-mRNA splicing factor. Involved in acute inflammatory responses including neutrophil activation and adhesion, chemoattraction of monocytes macrophages, opsonization of apoptotic neutrophils, and activation of mast cells. Together with TRIM16, coordinates the recognition of membrane damage with mobilization of the core autophagy regulators ATG16L1 and BECN1 in response to damaged endomembranes. When secreted, interacts with NK cell-activating receptor NCR3/NKp30 acting as an inhibitory ligand which antagonizes NK cell attack. The protein is Galectin-3 (LGALS3) of Canis lupus familiaris (Dog).